Reading from the N-terminus, the 510-residue chain is ATP synthase subunit alpha, chloroplastic (510 aa).

ATP is bound at residue 170–177; sequence GDRQTGKT.

The protein belongs to the ATPase alpha/beta chains family. As to quaternary structure, F-type ATPases have 2 components, CF(1) - the catalytic core - and CF(0) - the membrane proton channel. CF(1) has five subunits: alpha(3), beta(3), gamma(1), delta(1), epsilon(1). CF(0) has four main subunits: a, b, b' and c.

Its subcellular location is the plastid. It localises to the chloroplast thylakoid membrane. The catalysed reaction is ATP + H2O + 4 H(+)(in) = ADP + phosphate + 5 H(+)(out). Produces ATP from ADP in the presence of a proton gradient across the membrane. The alpha chain is a regulatory subunit. This Lotus japonicus (Lotus corniculatus var. japonicus) protein is ATP synthase subunit alpha, chloroplastic.